We begin with the raw amino-acid sequence, 277 residues long: Phosphoenolpyruvate synthase regulatory protein (277 aa).

ADP is bound at residue 157–164; sequence GVSRCGKT.

It belongs to the pyruvate, phosphate/water dikinase regulatory protein family. PSRP subfamily.

The catalysed reaction is [pyruvate, water dikinase] + ADP = [pyruvate, water dikinase]-phosphate + AMP + H(+). It carries out the reaction [pyruvate, water dikinase]-phosphate + phosphate + H(+) = [pyruvate, water dikinase] + diphosphate. Its function is as follows. Bifunctional serine/threonine kinase and phosphorylase involved in the regulation of the phosphoenolpyruvate synthase (PEPS) by catalyzing its phosphorylation/dephosphorylation. This Escherichia coli O6:K15:H31 (strain 536 / UPEC) protein is Phosphoenolpyruvate synthase regulatory protein.